The primary structure comprises 135 residues: Large ribosomal subunit protein uL16 (135 aa).

It belongs to the universal ribosomal protein uL16 family. In terms of assembly, part of the 50S ribosomal subunit.

Binds 23S rRNA and is also seen to make contacts with the A and possibly P site tRNAs. The chain is Large ribosomal subunit protein uL16 from Coprothermobacter proteolyticus (strain ATCC 35245 / DSM 5265 / OCM 4 / BT).